The sequence spans 278 residues: MDWLLACKALILGVVEGLTEFLPVSSTGHLIVAGSLLNFTDEHAKTFDVVIQLGAILAVCWEYRRRIGSVVSGLPSRPDARRFTLNVIIATIPAIVLGLLFEKTIKAALFSPVPVAFALVAGGVVILWAESRQRTRGETVARVQNVDDLGALDALKVGLAQCFALIPGMSRSGSTIIGGMLFGLDRRVATEFSFFLAIPIIFGATAYELHKDWHLLSVDALGTFALGFVAAFVSAFACVRWLLRYIAAHDFTAFAWYRIGFGLLILLVGYSGALNWTE.

Helical transmembrane passes span 85 to 105 (LNVI…EKTI), 108 to 128 (ALFS…VILW), 188 to 208 (VATE…TAYE), 218 to 238 (VDAL…AFAC), and 254 to 274 (FAWY…SGAL).

It belongs to the UppP family.

Its subcellular location is the cell inner membrane. It catalyses the reaction di-trans,octa-cis-undecaprenyl diphosphate + H2O = di-trans,octa-cis-undecaprenyl phosphate + phosphate + H(+). Its function is as follows. Catalyzes the dephosphorylation of undecaprenyl diphosphate (UPP). Confers resistance to bacitracin. The protein is Undecaprenyl-diphosphatase 1 of Paraburkholderia xenovorans (strain LB400).